A 78-amino-acid polypeptide reads, in one-letter code: Gas vesicle protein A (78 aa).

This sequence belongs to the gas vesicle GvpA family. In terms of assembly, the gas vesicle shell is 2 nm thick and consists of a single layer of this protein. It forms helical ribs nearly perpendicular to the long axis of the vesicle.

The protein resides in the gas vesicle shell. In terms of biological role, gas vesicles are hollow, gas filled proteinaceous nanostructures found in some microorganisms. During planktonic growth they allow positioning of the organism at a favorable depth for light or nutrient acquisition. GvpA forms the protein shell. The chain is Gas vesicle protein A from Halorubrum vacuolatum (Natronobacterium vacuolatum).